Here is a 30-residue protein sequence, read N- to C-terminus: Photosystem I reaction center subunit XII (30 aa).

A helical membrane pass occupies residues 6–26 (VFTILAIALVPAVMALLLGSA).

The protein belongs to the PsaM family.

It is found in the cellular thylakoid membrane. This Synechococcus sp. (strain JA-2-3B'a(2-13)) (Cyanobacteria bacterium Yellowstone B-Prime) protein is Photosystem I reaction center subunit XII.